Consider the following 369-residue polypeptide: Endoglucanase (369 aa).

The N-terminal stretch at 1 to 22 (MMTMLRGWITMIVMLTAINAQA) is a signal peptide. The active-site Proton donor is the Glu-56. Catalysis depends on Asp-117, which acts as the Nucleophile.

This sequence belongs to the glycosyl hydrolase 8 (cellulase D) family.

It is found in the secreted. The enzyme catalyses Endohydrolysis of (1-&gt;4)-beta-D-glucosidic linkages in cellulose, lichenin and cereal beta-D-glucans.. The protein operates within glycan metabolism; bacterial cellulose biosynthesis. Functionally, hydrolyzes carboxymethylcellulose. This Salmonella typhi protein is Endoglucanase (bcsZ).